A 342-amino-acid polypeptide reads, in one-letter code: L-threonine 3-dehydrogenase (342 aa).

Residue cysteine 38 participates in Zn(2+) binding. Residues threonine 40 and histidine 43 each act as charge relay system in the active site. Zn(2+)-binding residues include histidine 63, glutamate 64, cysteine 93, cysteine 96, cysteine 99, and cysteine 107. NAD(+) is bound by residues isoleucine 175, aspartate 195, arginine 200, 262 to 264 (LGI), and 286 to 287 (IY).

It belongs to the zinc-containing alcohol dehydrogenase family. Homotetramer. Zn(2+) is required as a cofactor.

It localises to the cytoplasm. It carries out the reaction L-threonine + NAD(+) = (2S)-2-amino-3-oxobutanoate + NADH + H(+). It participates in amino-acid degradation; L-threonine degradation via oxydo-reductase pathway; glycine from L-threonine: step 1/2. Its function is as follows. Catalyzes the NAD(+)-dependent oxidation of L-threonine to 2-amino-3-ketobutyrate. The protein is L-threonine 3-dehydrogenase of Burkholderia ambifaria (strain ATCC BAA-244 / DSM 16087 / CCUG 44356 / LMG 19182 / AMMD) (Burkholderia cepacia (strain AMMD)).